The chain runs to 209 residues: Large ribosomal subunit protein uL3 (209 aa).

Residues 127–166 form a disordered region; sequence NFGGGSRTHGQSDRLRAPGSVGGSSDPSRTFKGTRMAGRM.

The protein belongs to the universal ribosomal protein uL3 family. As to quaternary structure, part of the 50S ribosomal subunit. Forms a cluster with proteins L14 and L19.

In terms of biological role, one of the primary rRNA binding proteins, it binds directly near the 3'-end of the 23S rRNA, where it nucleates assembly of the 50S subunit. The sequence is that of Large ribosomal subunit protein uL3 from Chlorobaculum tepidum (strain ATCC 49652 / DSM 12025 / NBRC 103806 / TLS) (Chlorobium tepidum).